Reading from the N-terminus, the 369-residue chain is MHGESPIKRRESRKIWVGNVPVGGDAPIAVQSMTNTDTNDVAATVAQIQRLVDAGVDIVRVSVPDMDAAEAFGKIKQRVSVPLVADIHFDYKIALRVAELGVDCLRINPGNIGREDRVRAVVDAARDRGIPIRIGVNAGSLEKDLQKKYGEPTPAALVESALRHVEHLDRLDFQDFKVSVKASDVFMAVEAYRLLAKQIVQPLHLGITEAGGLRSGTVKSAVGLGMLLAEGIGDTIRISLAADPVEEVKVGYDILKSLHLRSRGINFIACPSCSRQNFDVVKTMNELEGRLEDLLVPLDVAVIGCVVNGPGEAKEAHVGLTGGTPNLIYIDGKPAQKLTNDNLVDELEKLIRQKAAEKAEADAALIARG.

Residues C270, C273, C305, and E312 each coordinate [4Fe-4S] cluster.

The protein belongs to the IspG family. [4Fe-4S] cluster serves as cofactor.

It carries out the reaction (2E)-4-hydroxy-3-methylbut-2-enyl diphosphate + oxidized [flavodoxin] + H2O + 2 H(+) = 2-C-methyl-D-erythritol 2,4-cyclic diphosphate + reduced [flavodoxin]. It participates in isoprenoid biosynthesis; isopentenyl diphosphate biosynthesis via DXP pathway; isopentenyl diphosphate from 1-deoxy-D-xylulose 5-phosphate: step 5/6. Its function is as follows. Converts 2C-methyl-D-erythritol 2,4-cyclodiphosphate (ME-2,4cPP) into 1-hydroxy-2-methyl-2-(E)-butenyl 4-diphosphate. This is 4-hydroxy-3-methylbut-2-en-1-yl diphosphate synthase (flavodoxin) from Pseudomonas putida (strain ATCC 47054 / DSM 6125 / CFBP 8728 / NCIMB 11950 / KT2440).